The following is a 1083-amino-acid chain: MSFFDMFGPMFDPEGGSNRAGRQNPRKPSNDDPIILNVETDGGDGPQPSSNVPPKRPSGPRITSKPNRPRKPSNGSKIFIGVVLALAIVIGLFFALAQFVTDVMWYSQLGFQSVIWTQLGTRVGLWLAYAVLIAAVGFISATLAIWARPDAADGSTIRVNGDTIEIGKSVSSKSARRIAVVISLIVGLVFGSQFNANWSEILLMFNSQSFGTKDPQFGIDNGFYVFVLPGLKLIMSAVSLLLLAGIIFSIVTHVLMGGIRITMPVNGHGLFRITKRARRQIGIWLMLNMFAWAANQVLGVFSHLTEEGSRITGATYTTVNATIPVTFIMAAITAILGVILGLWIMKSHTLEGSAPIAARASEALKAWKVPTVAIASAIVVSLVLTVAWPVLLQRFRVNPNAQEMESTYIQRNIDATRAAYGLDKVKAEQYKATTEGEEGALADSAESTAQIRLLDPQIISPTFKQLQQSKQYYTFADTVAVDKYDVDGVSQDTVIAARELDLDGLDNRNWVNDHTVYTHGYGVVAAYGNKVTADGQPKFFEAGIPTQGKLTDSEKYEPRIYFSPNATEYSIVGAPEGTKSWEFDYPTGSEGATNTFKGDGGPKIGNIFSRLLYAIRFGSDQILFSNRVNSNSQILYDRSPKERVAKVAPYLTLDGRVYPAVVDGRVKWIVDGYTTSDAYPYSQMTDLGEATKDSTTESSDTVSSLNSKNANYIRNSVKATVDAYDGSVDLYVWDQSDPVVKAWEKIFPGQYHQLSEISGDLMSHMRYPESLFKVQRELLAKYHVSSANQFFSGEDFWQTPVDPTESQQAQQRDILQPPYYLTLQTGGSSEPVFSLTSSYIPAGSSTREILTGFLSVDSDAGHEKGKIGSSYGTIRLQELPKDSNVPGPGQAQNNFNASADVSKELNLLESGSTNVQRGNLLTLPLGGGLVYVQPVYVKSSGSTSFPLLKKVLVAFGDQVGFADTLDEALDQVFGGDSGASAGDAENVGDTTDDKQDAKNDDSADGKTNTDGKQDTPSNTDGKTGGNNGDSSGTMSADLKKALDDAAQAMKDSDAAMKKGDWSAYGDAQKQLQEALNKAIELEQ.

Positions 1–72 (MSFFDMFGPM…TSKPNRPRKP (72 aa)) are disordered. The next 7 helical transmembrane spans lie at 78–98 (IFIG…ALAQ), 125–145 (LWLA…TLAI), 178–198 (IAVV…NANW), 239–259 (SLLL…MGGI), 281–301 (IGIW…LGVF), 325–345 (VTFI…LWIM), and 372–392 (VAIA…PVLL). The segment at 976 to 1061 (DSGASAGDAE…SDAAMKKGDW (86 aa)) is disordered. Composition is skewed to basic and acidic residues over residues 991 to 1013 (TDDK…DGKQ) and 1050 to 1060 (KDSDAAMKKGD).

It belongs to the UPF0182 family.

The protein resides in the cell membrane. The sequence is that of UPF0182 protein BAD_0641 from Bifidobacterium adolescentis (strain ATCC 15703 / DSM 20083 / NCTC 11814 / E194a).